The chain runs to 369 residues: 3-dehydroquinate synthase (369 aa).

Residues 71 to 76, 105 to 109, 129 to 130, lysine 142, lysine 151, and 169 to 172 each bind NAD(+); these read DGECHK, GVIND, TT, and TLST. 3 residues coordinate Zn(2+): glutamate 184, histidine 247, and histidine 264.

Belongs to the sugar phosphate cyclases superfamily. Dehydroquinate synthase family. The cofactor is Co(2+). Requires Zn(2+) as cofactor. NAD(+) serves as cofactor.

It is found in the cytoplasm. It carries out the reaction 7-phospho-2-dehydro-3-deoxy-D-arabino-heptonate = 3-dehydroquinate + phosphate. It participates in metabolic intermediate biosynthesis; chorismate biosynthesis; chorismate from D-erythrose 4-phosphate and phosphoenolpyruvate: step 2/7. Functionally, catalyzes the conversion of 3-deoxy-D-arabino-heptulosonate 7-phosphate (DAHP) to dehydroquinate (DHQ). This is 3-dehydroquinate synthase from Dichelobacter nodosus (strain VCS1703A).